The sequence spans 227 residues: MFCCCKDCRGNQRVSNFDSLTGVFFGDLEFGPQNQRYIKMNEEEDKDQDRVTRGCSHTHSCNPPGPEDASHSHTCFHAHTHLIISDQQENDHSDSSNKKRLCGNREAVRKYREKKKARTAYLEDEVMRLQSLNEQFLRKLQSQEMVETELIRLRALLVEMQGKIEVELCSFSFQKQCNGSGFVFKEDGCNLATSNMMCEAARVECEEGQTLHDPIQSFVPQPPPFSR.

A disordered region spans residues 44–68 (EDKDQDRVTRGCSHTHSCNPPGPED). The 67-residue stretch at 94 to 160 (DSSNKKRLCG…IRLRALLVEM (67 aa)) folds into the bZIP domain. The tract at residues 98 to 118 (KKRLCGNREAVRKYREKKKAR) is basic motif. The segment at 122-129 (LEDEVMRL) is leucine-zipper.

In terms of assembly, homodimer. As to expression, expressed in young leaves and cauline leaves.

It localises to the nucleus. The protein localises to the cytoplasm. In terms of biological role, transcription factor involved in the regulation of salt stress response. Functions as a negative transcriptional regulator of salt stress acclimation response by regulating cation homeostasis. Negatively regulates the expression of genes contributing to ion and osmotic homeostasis during salt stress, such as the Na(+) transporter HKT1, the Na(+)/H(+) antiporter SOS1, the aquaporin PIP2-1 and the glutamine synthetase GLN1-3. In addition, targets genes with functions in plant growth and development, such as argonaute 4 (AGO4) and cyclophilin 19 (CYP19). This chain is Basic leucine zipper 24, found in Arabidopsis thaliana (Mouse-ear cress).